Here is a 172-residue protein sequence, read N- to C-terminus: 3-hydroxydecanoyl-[acyl-carrier-protein] dehydratase (172 aa).

The active site involves His71.

The protein belongs to the thioester dehydratase family. FabA subfamily. As to quaternary structure, homodimer.

It is found in the cytoplasm. The enzyme catalyses a (3R)-hydroxyacyl-[ACP] = a (2E)-enoyl-[ACP] + H2O. It carries out the reaction (3R)-hydroxydecanoyl-[ACP] = (2E)-decenoyl-[ACP] + H2O. It catalyses the reaction (2E)-decenoyl-[ACP] = (3Z)-decenoyl-[ACP]. Its pathway is lipid metabolism; fatty acid biosynthesis. Functionally, necessary for the introduction of cis unsaturation into fatty acids. Catalyzes the dehydration of (3R)-3-hydroxydecanoyl-ACP to E-(2)-decenoyl-ACP and then its isomerization to Z-(3)-decenoyl-ACP. Can catalyze the dehydratase reaction for beta-hydroxyacyl-ACPs with saturated chain lengths up to 16:0, being most active on intermediate chain length. The polypeptide is 3-hydroxydecanoyl-[acyl-carrier-protein] dehydratase (Escherichia coli O139:H28 (strain E24377A / ETEC)).